The primary structure comprises 940 residues: MDDYKDTLNLPKTLFSMRGNLSKKEPNILKSWNENNLYKLIRKKNQEKKIFFLHDGPPYANGNIHIGHAVNKILKDIIIKSKNMSGFDAPYIPSWDCHGLPIEQKVEEKIKSNQGEISTTEFQEKCRKYAQDQVEKQKKDFIRLGVIGDWDNPHLTMNFKNEANIIKTLSKIVQKKHLYQDFKPIHWCLKCASSLSEAEIEYSKKKSDSIIVGFKFKYRSIIEKLFDFQISNKKEIHLLIWTTTPWTLPSSKAISIHPDFQYQLIETERCYLIIAKELVEKTLNTLKIKKSIIRNYVKGRFLEKMICLHPFLKNIDLPVILGKHVTLESGTGAVHTAPDHGLEDYIISQKYNIKTSNIVNFKGEYISNTHDKLDGVNVLEANSIIIELLIKNNTFFHHESLIHSYPHCWRHKSPVIYRATPQWFIDIDQKQLRIKLLQEIKKVRWIPEWGESRIGEMIKKRPDWCISRQRKWGVPMSIFIHKNTRKIHPNTFVFMKKIAKKVELEGLQVWWNIDSKEILGEEYQSYEKILDILDVWFESGNTHTTINYKNKNYTKKNADMFLEGSDQHRGWFMSSLIISTLISEKKPYSEVLTHGFVVDGKGQKMSKSIGNTISPNEIVDTLGADILRLWVASSNYSNDISISNEILKSSSDIYRRIRNTARFMLANISDFDPKKNIISKENMVLLDKWAIGQTKIVQEEIIQHYNNYNFHAVIQRLMYFCSIEMGSFYLDIIKDRQYTLKKHSQERRSSQTAIYYIINSLVRWIAPILSFTADEIWSYLPENNSQYVFMEEWFDKLFYLDQDDLFNYQFWNEIITIKHEINKFLEEAIQNKTINNSLETSIILYVSHELSNKLKILEQETKFIFLTSDIQIKLYDTAPKNAKKSKIVPYLKVSLEKIKGKKCPRCWHYFNFTKKNIKNSDICNRCILNTIGNGEKRIFI.

Residues 58 to 68 carry the 'HIGH' region motif; that stretch reads PYANGNIHIGH. E563 is an L-isoleucyl-5'-AMP binding site. Positions 604–608 match the 'KMSKS' region motif; sequence KMSKS. Position 607 (K607) interacts with ATP. Residues C903, C906, C923, and C926 each contribute to the Zn(2+) site.

Belongs to the class-I aminoacyl-tRNA synthetase family. IleS type 1 subfamily. As to quaternary structure, monomer. Zn(2+) is required as a cofactor.

It is found in the cytoplasm. It catalyses the reaction tRNA(Ile) + L-isoleucine + ATP = L-isoleucyl-tRNA(Ile) + AMP + diphosphate. In terms of biological role, catalyzes the attachment of isoleucine to tRNA(Ile). As IleRS can inadvertently accommodate and process structurally similar amino acids such as valine, to avoid such errors it has two additional distinct tRNA(Ile)-dependent editing activities. One activity is designated as 'pretransfer' editing and involves the hydrolysis of activated Val-AMP. The other activity is designated 'posttransfer' editing and involves deacylation of mischarged Val-tRNA(Ile). This Buchnera aphidicola subsp. Acyrthosiphon pisum (strain 5A) protein is Isoleucine--tRNA ligase.